We begin with the raw amino-acid sequence, 72 residues long: Putative DNA-directed RNA polymerase subunit omega (72 aa).

It belongs to the RNA polymerase subunit omega family.

It is found in the plastid. It localises to the chloroplast. It catalyses the reaction RNA(n) + a ribonucleoside 5'-triphosphate = RNA(n+1) + diphosphate. Its function is as follows. May be involved in RNA polymerase activity. The protein is Putative DNA-directed RNA polymerase subunit omega (rpoZ) of Cyanidium caldarium (Red alga).